The primary structure comprises 346 residues: Patr class I histocompatibility antigen, CH28 alpha chain (346 aa).

The N-terminal stretch at 1–21 (MAPRSLLLLFSGALALTETWA) is a signal peptide. An alpha-1 region spans residues 22–111 (GSHSLRYFST…LLRRYNQSEA (90 aa)). At 22 to 305 (GSHSLRYFST…EQSPQPTIPI (284 aa)) the chain is on the extracellular side. Asn-107 is a glycosylation site (N-linked (GlcNAc...) asparagine). An alpha-2 region spans residues 112–203 (GSHTLQGMNG…ENGKETLQRA (92 aa)). Disulfide bonds link Cys-122-Cys-185 and Cys-224-Cys-280. Residues 204-295 (DPPKAHIAHH…GLPQPLTLRW (92 aa)) form an alpha-3 region. The 89-residue stretch at 206–294 (PKAHIAHHPI…EGLPQPLTLR (89 aa)) folds into the Ig-like C1-type domain. The connecting peptide stretch occupies residues 296-305 (EQSPQPTIPI). Residues 306 to 329 (VGIVAGLVVLGAVVTGAVVAAVMW) traverse the membrane as a helical segment. Topologically, residues 330 to 346 (RKKSSDRNRGSYSQAAV) are cytoplasmic.

Belongs to the MHC class I family. Heterodimer of an alpha chain and a beta chain (beta-2-microglobulin).

The protein resides in the membrane. Involved in the presentation of foreign antigens to the immune system. The chain is Patr class I histocompatibility antigen, CH28 alpha chain from Pan troglodytes (Chimpanzee).